A 296-amino-acid chain; its full sequence is MKFENCRDCREEVVWWAFTADICMTLFKGVLGLMSGSVALVADSLHSGADVVASGVTQLSLKISNKPADERYPFGYGNIQYISSSIVGSLLLIGASFLMYGSVMKLISGTYEAPSIFAAVGASVTVIVNELMYRYQICVGNENNSPAIIANAWDNRSDAISSAAVMVGVIASVIGFPIADTIAAIGVSALVGRIGLELIGTSIHGLMDSSVDTELLQTAWQVAMDTPMVHSIYFLRGRHVGEDVQFDIRLRVDPNLRIKDSSMVAEAVRRRIQEEIPHARDIRLFVSPAPAAAARA.

The Cytoplasmic portion of the chain corresponds to 1 to 12 (MKFENCRDCREE). The transmembrane domain (TMD) stretch occupies residues 1–214 (MKFENCRDCR…GLMDSSVDTE (214 aa)). The chain crosses the membrane as a helical span at residues 13–33 (VVWWAFTADICMTLFKGVLGL). Residues 34–83 (MSGSVALVADSLHSGADVVASGVTQLSLKISNKPADERYPFGYGNIQYIS) lie on the Lumenal side of the membrane. A helical membrane pass occupies residues 84–104 (SSIVGSLLLIGASFLMYGSVM). The Cytoplasmic portion of the chain corresponds to 105–112 (KLISGTYE). Residues 113–133 (APSIFAAVGASVTVIVNELMY) traverse the membrane as a helical segment. Topologically, residues 134 to 164 (RYQICVGNENNSPAIIANAWDNRSDAISSAA) are lumenal. The helical transmembrane segment at 165-185 (VMVGVIASVIGFPIADTIAAI) threads the bilayer. Topologically, residues 186 to 296 (GVSALVGRIG…SPAPAAAARA (111 aa)) are cytoplasmic. Residues 215-296 (LLQTAWQVAM…SPAPAAAARA (82 aa)) are C-terminal domain (CTD).

This sequence belongs to the cation diffusion facilitator (CDF) transporter (TC 2.A.4) family. Forms heterodimers with MamM. Probably interacts with MamE.

The protein resides in the magnetosome membrane. Plays a dual, essential role in magnetosome formation; required for magnetosome vesicle formation as well as biomineralization. Probably binds and transports iron. Requires heterodimerization with MamM for stability. This Paramagnetospirillum magneticum (strain ATCC 700264 / AMB-1) (Magnetospirillum magneticum) protein is Magnetosome protein MamB (mamB).